Reading from the N-terminus, the 703-residue chain is Lactococcin-G-processing and transport ATP-binding protein LagD (703 aa).

One can recognise a Peptidase C39 domain in the interval 7–132 (QQDEKDCGVA…KEWTGVLLFP (126 aa)). Cys13 is an active-site residue. Positions 153 to 435 (PILIKQKSLF…IINLQVKMQK (283 aa)) constitute an ABC transmembrane type-1 domain. A run of 7 helical transmembrane segments spans residues 162–182 (FITI…DNII), 189–209 (TLNI…LFEY), 224–244 (MSIM…FFAT), 267–287 (ATLS…TLAI), 291–311 (QLFL…YVFI), 381–401 (MVIE…YVID), and 409–429 (LITY…IINL). The ABC transporter domain occupies 469 to 703 (IKLDKVSFSY…EGVYRRLLNA (235 aa)). Residue 502 to 509 (GVSGSGKS) coordinates ATP.

It belongs to the ABC transporter superfamily. LagD family. Homodimer.

It localises to the cell membrane. LagD (TC 3.A.1) is involved in processing the signal peptide and probably also in export of the bacteriocin lactococcin G. This is Lactococcin-G-processing and transport ATP-binding protein LagD (lagD) from Lactococcus lactis subsp. lactis (Streptococcus lactis).